The sequence spans 141 residues: Large ribosomal subunit protein uL11 (141 aa).

Belongs to the universal ribosomal protein uL11 family. In terms of assembly, part of the ribosomal stalk of the 50S ribosomal subunit. Interacts with L10 and the large rRNA to form the base of the stalk. L10 forms an elongated spine to which L12 dimers bind in a sequential fashion forming a multimeric L10(L12)X complex. Post-translationally, one or more lysine residues are methylated.

Its function is as follows. Forms part of the ribosomal stalk which helps the ribosome interact with GTP-bound translation factors. The chain is Large ribosomal subunit protein uL11 from Alkaliphilus oremlandii (strain OhILAs) (Clostridium oremlandii (strain OhILAs)).